The primary structure comprises 214 residues: Heat shock 70 kDa protein cognate 1 (214 aa).

This sequence belongs to the heat shock protein 70 family.

The polypeptide is Heat shock 70 kDa protein cognate 1 (Hsc70-1) (Drosophila simulans (Fruit fly)).